A 323-amino-acid chain; its full sequence is Transcription initiation factor IIB 7 (323 aa).

Residues 1 to 16 (MTRSTRQRERETAAKQ) show a composition bias toward basic and acidic residues. The interval 1-35 (MTRSTRQRERETAAKQEEEEDSEEGVRECPECGSD) is disordered. A TFIIB-type zinc finger spans residues 24–56 (EGVRECPECGSDNLVKSSDRAELVCNDCGLVVE). 4 residues coordinate Zn(2+): C29, C32, C48, and C51. A run of 2 repeats spans residues 142-225 (SEID…SQEL) and 236-317 (KYVP…EQIE).

It belongs to the TFIIB family.

Stabilizes TBP binding to an archaeal box-A promoter. Also responsible for recruiting RNA polymerase II to the pre-initiation complex (DNA-TBP-TFIIB). This chain is Transcription initiation factor IIB 7, found in Halobacterium salinarum (strain ATCC 700922 / JCM 11081 / NRC-1) (Halobacterium halobium).